The following is a 137-amino-acid chain: uncharacterized protein (137 aa).

The 115-residue stretch at 4-118 folds into the CENP-V/GFA domain; sequence YEGNCLCKAI…CIDDKPDCYD (115 aa). The Zn(2+) site is built by Cys-8, Cys-10, Cys-27, Cys-29, Cys-32, Cys-71, and Cys-74.

This sequence belongs to the Gfa family. Zn(2+) serves as cofactor.

It localises to the cytoplasm. Its subcellular location is the nucleus. This is an uncharacterized protein from Schizosaccharomyces pombe (strain 972 / ATCC 24843) (Fission yeast).